A 426-amino-acid polypeptide reads, in one-letter code: Glutamate-1-semialdehyde 2,1-aminomutase (426 aa).

Lys265 carries the post-translational modification N6-(pyridoxal phosphate)lysine.

The protein belongs to the class-III pyridoxal-phosphate-dependent aminotransferase family. HemL subfamily. Homodimer. Pyridoxal 5'-phosphate serves as cofactor.

The protein resides in the cytoplasm. It catalyses the reaction (S)-4-amino-5-oxopentanoate = 5-aminolevulinate. The protein operates within porphyrin-containing compound metabolism; protoporphyrin-IX biosynthesis; 5-aminolevulinate from L-glutamyl-tRNA(Glu): step 2/2. In Actinobacillus pleuropneumoniae serotype 7 (strain AP76), this protein is Glutamate-1-semialdehyde 2,1-aminomutase.